The sequence spans 334 residues: Eukaryotic translation initiation factor 3 subunit H (334 aa).

Residues 21 to 155 (VQIDGLVVLK…LKAYRLTPKL (135 aa)) form the MPN domain. The tract at residues 247–284 (RNVGKQQQQKHQYTQRKQQENLQRLSRGETPLPEEDVN) is disordered. Residues 251 to 262 (KQQQQKHQYTQR) are compositionally biased toward low complexity.

The protein belongs to the eIF-3 subunit H family. In terms of assembly, component of the eukaryotic translation initiation factor 3 (eIF-3) complex, which is composed of 13 subunits: eif3a, eif3b, eif3c, eif3d, eif3e, eif3f, eif3g, eif3h, eif3i, eif3j, eif3k, eif3l and eif3m.

The protein resides in the cytoplasm. In terms of biological role, component of the eukaryotic translation initiation factor 3 (eIF-3) complex, which is involved in protein synthesis of a specialized repertoire of mRNAs and, together with other initiation factors, stimulates binding of mRNA and methionyl-tRNAi to the 40S ribosome. The eIF-3 complex specifically targets and initiates translation of a subset of mRNAs involved in cell proliferation. This chain is Eukaryotic translation initiation factor 3 subunit H (eif3h), found in Xenopus laevis (African clawed frog).